The following is a 134-amino-acid chain: ATP synthase epsilon chain, chloroplastic (134 aa).

The protein belongs to the ATPase epsilon chain family. F-type ATPases have 2 components, CF(1) - the catalytic core - and CF(0) - the membrane proton channel. CF(1) has five subunits: alpha(3), beta(3), gamma(1), delta(1), epsilon(1). CF(0) has three main subunits: a, b and c.

It is found in the plastid. Its subcellular location is the chloroplast thylakoid membrane. In terms of biological role, produces ATP from ADP in the presence of a proton gradient across the membrane. The sequence is that of ATP synthase epsilon chain, chloroplastic from Pelargonium hortorum (Common geranium).